The sequence spans 761 residues: Translational repressor ifet-1 (761 aa).

Disordered stretches follow at residues 101-274, 386-446, 557-592, 681-702, and 730-761; these read SPQR…SSGG, KGME…QHLH, VQRQ…AHNQ, QQAQ…QQHQ, and GSQF…AVPK. Composition is skewed to basic and acidic residues over residues 114–128, 164–189, and 212–222; these read PTDD…ERLG, RGTR…EERL, and IELRGFDEPKK. Composition is skewed to polar residues over residues 400–410, 557–568, 576–592, and 690–702; these read QDPSQQAQLLQ, VQRQLQKSSSNA, SQSP…AHNQ, and ERQG…QQHQ.

Interacts with cgh-1. Interacts with ife-1 and oma-1. As to expression, in the embryo, significantly enriched in the germ cell lineage.

It is found in the cytoplasm. Its function is as follows. Involved in translational repression of multiple mRNAs in the distal gonad. Recruited to the 3' untranslated region (UTR) of zif-1 by oma-1 and is required for translational repression of zif-1. May also be involved in translational repression of mei-1 through recruitment to the mei-1 3' UTR by oma-1. Required for oogenesis but not spermatogenesis, for P granule formation and for the localization of car-1 and cgh-1 to P granules. Required for normal spindle orientation in early embryos. This is Translational repressor ifet-1 from Caenorhabditis elegans.